Reading from the N-terminus, the 90-residue chain is Small ribosomal subunit protein uS15c (90 aa).

Belongs to the universal ribosomal protein uS15 family. In terms of assembly, part of the 30S ribosomal subunit.

Its subcellular location is the plastid. The protein localises to the chloroplast. In Lolium perenne (Perennial ryegrass), this protein is Small ribosomal subunit protein uS15c (rps15-A).